A 441-amino-acid chain; its full sequence is 3-phosphoshikimate 1-carboxyvinyltransferase (441 aa).

Residues 1 to 10 show a composition bias toward polar residues; the sequence is MSVTSTASSS. The disordered stretch occupies residues 1-21; that stretch reads MSVTSTASSSRELRAGGGLSG. 3-phosphoshikimate contacts are provided by Lys29, Ser30, and Arg34. Lys29 is a binding site for phosphoenolpyruvate. Residues Gly103 and Arg132 each contribute to the phosphoenolpyruvate site. Ser177, Gln179, Asp328, and Lys355 together coordinate 3-phosphoshikimate. Gln179 is a phosphoenolpyruvate binding site. Asp328 (proton acceptor) is an active-site residue. 2 residues coordinate phosphoenolpyruvate: Arg359 and Arg401.

It belongs to the EPSP synthase family. Monomer.

The protein localises to the cytoplasm. The enzyme catalyses 3-phosphoshikimate + phosphoenolpyruvate = 5-O-(1-carboxyvinyl)-3-phosphoshikimate + phosphate. It participates in metabolic intermediate biosynthesis; chorismate biosynthesis; chorismate from D-erythrose 4-phosphate and phosphoenolpyruvate: step 6/7. In terms of biological role, catalyzes the transfer of the enolpyruvyl moiety of phosphoenolpyruvate (PEP) to the 5-hydroxyl of shikimate-3-phosphate (S3P) to produce enolpyruvyl shikimate-3-phosphate and inorganic phosphate. In Prochlorococcus marinus (strain MIT 9303), this protein is 3-phosphoshikimate 1-carboxyvinyltransferase.